We begin with the raw amino-acid sequence, 830 residues long: MEDDDGRESFEINDMDLEYAMNPGGRRRFQNKDQATYGVFAPDSDDDDDEQGTSRGPYKKRSKISAPMSFVSGGIQQGNKIDKDDPASLNLNLGGEKKPKEDDEGSIQIDFDKRTKKAPKQNGAQVFAGMRSSANHGAADINQFGSWMRGDGNSNKIMKMMQAMGYKPGEGLGAQGQGIVEPVQAQLRKGRGAVGAYGKESTATGPKFGESAADAQKRMAQEGTSSRPTNDDQEKSGLKIKGSWKKSQTVKTKYRTIEDVMEEGMSASRPASHQQSQQYSNIKVIDMTGKQQKIYSGYDSFSMKTRSEYDTVDDEERTVFDVPELIHNLNLLVDLTEEGIRRSNQQLISLKDQTTALEYDLQQVQKSLGTEEQEAQHIKDVYELIDGFSSNRSPSMEECQELFRRLRSEFPHEYELYSLETVAIPTVLPLIQKYFVAWKPLEDKNYGCELISTWRDILDDSKNGRKMTFGHNKTKGDEIRAYDRIIWEGILPSIRRACLQWDPSTQMHEMIELVEQWIPLLSAWITENILEQLVVPKIAERVNQWDPMTDEIPIHEWLVPWLVLLGDRIQTVMPPIRQKLSKALKLWDPMDRSALETLRPWQNVWSAATFSAFIAQNIVPKLGVALDTMELNPTMNPEYPEWTACMEWLEFTHPDAIANIVTKYFFPRFYNCLCLWLDSPGVDYNEVKRWYGSWKARIPQVLVNYPTVNENLRRSMIAIGRSLQGEKVGGLQATPIAPMAPPPPMAPHFTQAAPVQKLSLKEIIEYTAGKNGFTYHPQKDRYKDGRQVFWFGALSIYLDSEMVYVMDPIEFVWRPSGLNELIQMAQGAQG.

Over residues 1–17 (MEDDDGRESFEINDMDL) the composition is skewed to acidic residues. Disordered regions lie at residues 1 to 122 (MEDD…PKQN) and 196 to 244 (AYGK…KGSW). Residues 153 to 199 (NSNKIMKMMQAMGYKPGEGLGAQGQGIVEPVQAQLRKGRGAVGAYGK) form the G-patch domain.

Belongs to the TFP11/STIP family. As to quaternary structure, identified in the spliceosome C complex. Can assemble into large rod-like polymers. In terms of tissue distribution, detected in muscle cells from body, pharynx and vulva, in neurons from head and tail, in pharyngeal gland and in tail hypodermal cells.

It is found in the nucleus. Its function is as follows. May be involved in pre-mRNA splicing. Required for embryonic development and survival. This Caenorhabditis elegans protein is Septin and tuftelin-interacting protein 1 homolog (stip-1).